A 1153-amino-acid chain; its full sequence is Duffy receptor beta form (1153 aa).

The signal sequence occupies residues 1–21 (MEGKKKRPLFFLLVLLLSHKA). The Extracellular portion of the chain corresponds to 22-1085 (NNVLFERMKG…YECFTKGSST (1064 aa)). Asn-134, Asn-179, and Asn-202 each carry an N-linked (GlcNAc...) asparagine glycan. 2 cysteine pairs are disulfide-bonded: Cys-214-Cys-243 and Cys-227-Cys-234. Asn-252 and Asn-348 each carry an N-linked (GlcNAc...) asparagine glycan. Disulfide bonds link Cys-297–Cys-374, Cys-412–Cys-429, Cys-424–Cys-504, and Cys-433–Cys-502. N-linked (GlcNAc...) asparagine glycosylation is found at Asn-430 and Asn-467. Disordered regions lie at residues 520-545 (LKSA…GAEK), 565-591 (DEAA…DNIE), 612-631 (RGAT…SYSG), and 655-981 (ENSE…LYSH). 2 stretches are compositionally biased toward polar residues: residues 531–542 (SHSTIQPMSSSG) and 574–586 (NGNQ…NIKG). N-linked (GlcNAc...) asparagine glycosylation is found at Asn-576 and Asn-626. Over residues 661–675 (LETKHKIFEPSKDNS) the composition is skewed to basic and acidic residues. Positions 677–733 (NSENSGSMEFKATSSNPITEAVESSSAEGQVQEDSAHRSVNTGRDNSTISAATSDDG) are enriched in polar residues. The N-linked (GlcNAc...) asparagine glycan is linked to Asn-722. Positions 791-800 (IDGKNVDIAE) are enriched in basic and acidic residues. The segment covering 819-834 (TDNGNVPRSGNKQNEG) has biased composition (polar residues). N-linked (GlcNAc...) asparagine glycosylation is found at Asn-847 and Asn-856. Over residues 867–878 (GNEKDFQKHDFM) the composition is skewed to basic and acidic residues. A compositionally biased stretch (low complexity) spans 884–942 (NDQTSSDQTSSDQTSSNQTSSDQTSSNQTSSDQTSSDQISSDQTSSDQTSSNQTSSDQT). 3 N-linked (GlcNAc...) asparagine glycosylation sites follow: Asn-900, Asn-910, and Asn-935. Basic and acidic residues predominate over residues 945–969 (TEEHHRDNVRNPEIKSSEDMSKGDF). The span at 971 to 981 (RNSNSNELYSH) shows a compositional bias: polar residues. Residues 1086 to 1106 (GIGIVYFATGGAFLIILLLFV) form a helical membrane-spanning segment. Residues 1107–1153 (SKNVASNDYEEEATFDEFVEYSDDIHRTPLMPNHIEHMQQFTPLDYS) lie on the Cytoplasmic side of the membrane.

Its subcellular location is the membrane. Binds to Neu5Gc-sialylated receptors on macaque erythrocytes. This Plasmodium knowlesi protein is Duffy receptor beta form.